The primary structure comprises 139 residues: ATP synthase epsilon chain (139 aa).

This sequence belongs to the ATPase epsilon chain family. F-type ATPases have 2 components, CF(1) - the catalytic core - and CF(0) - the membrane proton channel. CF(1) has five subunits: alpha(3), beta(3), gamma(1), delta(1), epsilon(1). CF(0) has three main subunits: a, b and c.

It localises to the cell inner membrane. Its function is as follows. Produces ATP from ADP in the presence of a proton gradient across the membrane. This Acinetobacter baumannii (strain AB307-0294) protein is ATP synthase epsilon chain.